We begin with the raw amino-acid sequence, 199 residues long: Interleukin-11 (199 aa).

Positions 1–21 (MNCVCRLVLVVLSLWPDTAVA) are cleaved as a signal peptide. The interval 182–190 (HLTLDWAVR) is important for interaction with IL11RA and for the stimulation of cell proliferation.

This sequence belongs to the IL-6 superfamily. As to quaternary structure, interacts with IL11RA to associate with IL6ST, giving rise to a multimeric signaling complex.

The protein resides in the secreted. Its function is as follows. Cytokine that stimulates the proliferation of hematopoietic stem cells and megakaryocyte progenitor cells and induces megakaryocyte maturation resulting in increased platelet production. Also promotes the proliferation of hepatocytes in response to liver damage. Binding to its receptor formed by IL6ST and IL11RA activates a signaling cascade that promotes cell proliferation. Signaling leads to the activation of intracellular protein kinases and the phosphorylation of STAT3. The interaction with the membrane-bound IL11RA and IL6ST stimulates 'classic signaling', whereas the binding of IL11 and soluble IL11RA to IL6ST stimulates 'trans-signaling'. This chain is Interleukin-11, found in Homo sapiens (Human).